We begin with the raw amino-acid sequence, 847 residues long: Protein translocase subunit SecA (847 aa).

ATP contacts are provided by residues Gln87, 105-109 (GEGKT), and Asp495. The disordered stretch occupies residues 828 to 847 (SSNSPSDARNRPIEHDDNAV). The span at 835 to 847 (ARNRPIEHDDNAV) shows a compositional bias: basic and acidic residues.

Belongs to the SecA family. As to quaternary structure, monomer and homodimer. Part of the essential Sec protein translocation apparatus which comprises SecA, SecYEG and auxiliary proteins SecDF. Other proteins may also be involved.

The protein localises to the cell membrane. The protein resides in the cytoplasm. It carries out the reaction ATP + H2O + cellular proteinSide 1 = ADP + phosphate + cellular proteinSide 2.. Its function is as follows. Part of the Sec protein translocase complex. Interacts with the SecYEG preprotein conducting channel. Has a central role in coupling the hydrolysis of ATP to the transfer of proteins into and across the cell membrane, serving as an ATP-driven molecular motor driving the stepwise translocation of polypeptide chains across the membrane. The sequence is that of Protein translocase subunit SecA from Tropheryma whipplei (strain TW08/27) (Whipple's bacillus).